The primary structure comprises 510 residues: MVDFAEHRKALLCNDAQSIADYESAMGEAVKAVSAWLQNEKMYTGGSIKELRSAISFQPSKEGMGVQQSLQRMIELFLNKSLKVHHPHSLAHLHCPTMVMSQIAEVLINATNQSMDSWDQSPAGSLMEVQLIDWLRQKVGYGSGQAGVFTSGGTQSNLMGVLLARDWCIAKNWKDENGNPWSVQRDGIPAEAMKNVKVICSENAHFSVQKNMAMMGMGFQSVVTVPVNENAQMDVDALEKTMAHLQAEGKVVACVVATAGTTDAGAIHPLKKIREITNKYGSWMHIDAAWGGALILSNTYRAMLDGIELSDSITLDFHKHYFQSISCGAFLLKDEANYRFMHYEAEYLNSAYDEEHGVPNLVSKSLQTTRRFDALKLWMTIESLGEELYGSMIDHGVKLTREVADYIKATEGLELLVEPQFASVLFRVVPEGYPVEFIDSLNQNVADELFARGEANIGVTKVGNVQSLKMTTLSPVVTVDNVKNLLAQVLAEAERIKDAIASGNYVPPID.

Residue K319 is modified to N6-(pyridoxal phosphate)lysine.

The protein belongs to the group II decarboxylase family. Pyridoxal 5'-phosphate is required as a cofactor.

The enzyme catalyses L-2,4-diaminobutanoate + H(+) = propane-1,3-diamine + CO2. It functions in the pathway amine and polyamine biosynthesis; 1,3-diaminopropane biosynthesis; 1,3-diaminopropane from L-aspartate 4-semialdehyde: step 2/2. This Acinetobacter baumannii protein is L-2,4-diaminobutyrate decarboxylase (ddc).